A 529-amino-acid polypeptide reads, in one-letter code: MEHRVVGPGPYRATRLWNETVELFRARMPLRRHRCRFKSYEHCFTASEAVDWLHELLRNSQNFGPEVTRKQTVQLLGKFLKNHVIEDIKGKWGQEDFEDNRHLYRFPPSSPLKPYPKKPLYQRDVIKFPEWNDPPPGTSQENIPVRPIVMNSEMWFKRHSIAIGEVPACRLVHRRQLTEANVEEIWKSTTLSYLQKILGLDSLEEVLNTKLVSSKFIIHNVYSVSKQGVVILDDKSKELPHWVLSAMKCLANWPNCTDWKQPMYLGFEKDVFKTIADYYGHLKEPLLTFHLFDAFVSVLGLLPKEKTAIEAFQLCCLLLPPENRRKLQLLMRMMARICLNKEMPPLSDGFGTRTLMVQTFSRCILCSKDEVDLDELLAARLVTFLMDNYQEILKVPLALQTSIEERVAHLRRVQIKYPGADMDITLSAPSFCRQISPEEFEYQRAYGSQEPLAALLEEVIADDKLSSKEKKKKLKQFQKSYPEVYQERFPTPESEALLFPEKPKAKPQLFMWALRKPFQPFQRTRSFRM.

A DEP domain is found at Phe-24–Pro-108. Residue Ser-160 is modified to Phosphoserine. The Rho-GAP domain occupies Asp-201–Leu-393. Residue Ser-436 is modified to Phosphoserine.

This Mus musculus (Mouse) protein is DEP domain-containing protein 1B (Depdc1b).